A 469-amino-acid polypeptide reads, in one-letter code: MVIYSLPLARWVSSLRRYFRHELLPLLADLRLAIGLLLAIAVLSATGTVIEQEETAAFYQAHYPEHPALFGFLTWRVILSLGLDHVYRTPWFLAILILFGSSLAACSLTRQWPMLKRARRWSYLTRPQSFQRLPFRTYLPQQSLQGLPQQLRRQGYLVFQEGHYLYARKGLIGRIGPILVHVSMLLILLGAIWGSISGFKAQELIPSGGVASIQHLTGAGDLARAHLPTWQIRANRFWIDYAADGRVKQFYSDLSILDQGQEVKRQTISVNHPLSYRGVTLYQADWSIDSIRIRINNSPTFQIPVVPVRTEAGNKLWGAFVPTQPDMSQGLTLLLPDLQGTALLYDTEGQWMGSLRQGMSLALDEVAPQRFPNPLTLYLDEVIGATGLQIKSDPGIPAVYLGFGLLMVGVVMSYFSYSQIWALQTETGLYLGGKTNRALVTFEREFDRLVEQQKVAFSLSQIPVEAEIG.

A run of 3 helical transmembrane segments spans residues 30-50 (LRLA…GTVI), 89-109 (TPWF…CSLT), and 175-195 (IGPI…IWGS).

The protein belongs to the Ccs1/CcsB family. As to quaternary structure, may interact with CcsA.

It localises to the cellular thylakoid membrane. In terms of biological role, required during biogenesis of c-type cytochromes (cytochrome c6 and cytochrome f) at the step of heme attachment. This chain is Cytochrome c biogenesis protein CcsB, found in Synechococcus sp. (strain JA-2-3B'a(2-13)) (Cyanobacteria bacterium Yellowstone B-Prime).